The chain runs to 259 residues: Ras-related protein Rab-34 (259 aa).

Position 1 is an N-acetylmethionine (Met-1). The GTP site is built by Ser-62, Val-63, Gly-64, Lys-65, Thr-66, Asp-78, Tyr-81, and Thr-84. Thr-66 lines the Mg(2+) pocket. The Switch 1 motif lies at 71–89; the sequence is RFCKDTFDKNYKATIGVDF. Mg(2+) contacts are provided by Thr-84 and Asp-107. The Switch 2 motif lies at 108–127; that stretch reads TAGQERFKCIASTYYRGAQA. The GTP site is built by Gly-110, Lys-167, Asp-169, and Ser-198. At Ser-241 the chain carries Phosphoserine. 2 S-geranylgeranyl cysteine lipidation sites follow: Cys-257 and Cys-258.

Belongs to the small GTPase superfamily. Rab family. Interacts with RILP. The GTP-bound form interacts with REP15. It depends on Mg(2+) as a cofactor.

The protein resides in the cytoplasm. It localises to the golgi apparatus. It is found in the cytoplasmic vesicle. Its subcellular location is the phagosome. The protein localises to the phagosome membrane. The protein resides in the cell projection. It localises to the cilium. It is found in the cytoskeleton. Its subcellular location is the microtubule organizing center. The protein localises to the centrosome. The protein resides in the centriole. It carries out the reaction GTP + H2O = GDP + phosphate + H(+). Regulated by guanine nucleotide exchange factors (GEFs) which promote the exchange of bound GDP for free GTP. Regulated by GTPase activating proteins (GAPs) which increase the GTP hydrolysis activity. Inhibited by GDP dissociation inhibitors (GDIs). The small GTPases Rab are key regulators of intracellular membrane trafficking, from the formation of transport vesicles to their fusion with membranes. Rabs cycle between an inactive GDP-bound form and an active GTP-bound form that is able to recruit to membranes different sets of downstream effectors directly responsible for vesicle formation, movement, tethering and fusion. RAB34 transports protein involved in the redistribution of lysosomes to the peri-Golgi region. Plays a role in the maturation of phagosomes that engulf pathogens, such as S.aureus and M.tuberculosis. Plays a role in the fusion of phagosomes with lysosomes. Involved in ciliogenesis. In particular, it is required for early steps of the intracellular cilium assembly pathway initiated by trafficking and docking of ciliary vesicles to the centrioles in the cytoplasm, followed by axoneme formation in the cytoplasm. After axoneme elongation, the centrioles migrate close to the cell surface so that ciliary vesicles can fuse with the plasma membrane to expose cilia to the extracellular space. It seems dispensable for ciliogenesis via the extracellular pathway where cilium assembly begins after migration and docking of the centriole to the plasma membrane. Also acts as a positive regulator of hedgehog signaling and regulates ciliary function. This chain is Ras-related protein Rab-34, found in Rattus norvegicus (Rat).